The following is a 708-amino-acid chain: Putative adhesion G protein-coupled receptor F2P (708 aa).

Residues 1–451 lie on the Extracellular side of the membrane; sequence MGLTAYGNRR…ESLILTYITY (451 aa). N-linked (GlcNAc...) asparagine glycosylation is found at asparagine 21, asparagine 220, asparagine 252, asparagine 260, asparagine 305, asparagine 313, and asparagine 358. Residues 293–442 form the GAIN-B domain; the sequence is MGTTISGDNI…SILMSPHILE (150 aa). 2 disulfides stabilise this stretch: cysteine 394–cysteine 421 and cysteine 409–cysteine 423. The tract at residues 394–442 is GPS; sequence CVGWHSVENRWDQQACKMIQENSQQAVCKCRPSKLFTSFSILMSPHILE. Residues 452–472 traverse the membrane as a helical segment; sequence VGLGISICSLILCLSIEVLVW. Residues 473–487 lie on the Cytoplasmic side of the membrane; sequence SQVTKTEITYLRHVC. Residues 488-508 form a helical membrane-spanning segment; the sequence is IVNIAATLLMADVWFIVASFL. The Extracellular portion of the chain corresponds to 509–530; that stretch reads SGPITHHKGCVAATFFVHFFYL. A helical membrane pass occupies residues 531-551; sequence SVFFWMLAKALLILYGIMIVF. Residues 552 to 557 lie on the Cytoplasmic side of the membrane; the sequence is HTLPKS. The helical transmembrane segment at 558–578 threads the bilayer; that stretch reads VLVASLFSVGYGCPLAIAAIT. The Extracellular segment spans residues 579–606; the sequence is VAATEPGKGYLRPEICWLNWDMTKALLA. The helical transmembrane segment at 607–627 threads the bilayer; that stretch reads FVIPALAIVVVNLITVTLVIV. Topologically, residues 628 to 650 are cytoplasmic; sequence KTQRAAIGNSMFQEVRAIVRISK. The helical transmembrane segment at 651–671 threads the bilayer; sequence NIAILTPLLGLTWGFGVATVI. Topologically, residues 672–674 are extracellular; that stretch reads DDR. The helical transmembrane segment at 675-695 threads the bilayer; the sequence is SLAFHIIFSLLNAFQVSPDAS. Residues 696–708 are Cytoplasmic-facing; sequence DQVQSERIHEDVL.

Belongs to the G-protein coupled receptor 2 family. Adhesion G-protein coupled receptor (ADGR) subfamily. High expression in kidney. Up-regulated in lung adenocarcinomas and prostate cancers.

It localises to the membrane. Its function is as follows. Orphan receptor. This is Putative adhesion G protein-coupled receptor F2P from Homo sapiens (Human).